A 168-amino-acid chain; its full sequence is Scytalone dehydratase arp1 (168 aa).

The substrate site is built by Tyr29 and Tyr49. Catalysis depends on residues His84 and His109. Asn130 lines the substrate pocket.

It belongs to the scytalone dehydratase family. As to quaternary structure, homotrimer. Each subunit contains an active site, located in the central part of the hydrophobic core of the monomer, which functions independently.

The protein resides in the endosome. The enzyme catalyses scytalone = 1,3,8-trihydroxynaphthalene + H2O. It functions in the pathway pigment biosynthesis; melanin biosynthesis. With respect to regulation, fenoxanil inhibits arp1 scytalone dehydratase activity. Scytalone dehydratase; part of the gene cluster that mediates the biosynthesis of dihydroxynaphthalene (DHN)-melanin, a bluish-green pigment and a structural component of the conidial wall. The first step of the pathway is the production of the heptaketide naphtopyrone YWA1 by the polyketide synthase alb1 though condensation of acetyl-CoA with malonyl-CoA. The naphtopyrone YWA1 is then converted to the pentaketide 1,3,6,8-tetrahydroxynaphthalene (1,3,6,8-THN) by the heptaketide hydrolyase ayg1 though chain-length shortening. 1,3,6,8-THN is substrate of the hydroxynaphthalene reductase arp2 to yield scytalone. The scytalone dehydratase arp1 then reduces scytalone to 1,3,8-THN. 1,3,8-THN is also substrate of the hydroxynaphthalene reductase arp2 to yield vermelone. Vermelone is further converted by the multicopper oxidase abr1 to 1,8-DHN. Finally the laccase abr2 transforms 1,8-DHN to DHN-melanin. DHN-melanin biosynthesis appears to be initiated in endosomes where early enzymes (abl1, ayg1, arp1 and arp2) localize, with exocytosis leading to melanin deposition on the cell surface where late enzymes (abr1 and abr2) localize. DHN-melanin is an important structural component of the outer cell wall and is required for the presence of conidial surface hydrophobins. DHN-melanin also plays a crucial role in fungal virulence, including a protective role against the host's immune defenses. DHN-melanin also protects conidia against amoeba predation. This chain is Scytalone dehydratase arp1, found in Aspergillus fumigatus (strain ATCC MYA-4609 / CBS 101355 / FGSC A1100 / Af293) (Neosartorya fumigata).